A 403-amino-acid polypeptide reads, in one-letter code: Tripartite motif-containing protein 59 (403 aa).

The segment at Cys-10–Arg-60 adopts an RING-type zinc-finger fold. The segment at Pro-92–Leu-134 adopts a B box-type zinc-finger fold. Zn(2+) contacts are provided by Cys-97, His-100, Cys-120, and His-126. Positions Leu-163–Ser-246 form a coiled coil. The helical transmembrane segment at Ile-329–Asn-349 threads the bilayer.

The protein belongs to the TRIM/RBCC family. In terms of assembly, interacts with ECSIT. Moderately expressed in the spleen, brain and heart and very highly expressed in the testis.

It localises to the endoplasmic reticulum membrane. It carries out the reaction S-ubiquitinyl-[E2 ubiquitin-conjugating enzyme]-L-cysteine + [acceptor protein]-L-lysine = [E2 ubiquitin-conjugating enzyme]-L-cysteine + N(6)-ubiquitinyl-[acceptor protein]-L-lysine.. It functions in the pathway protein modification; protein ubiquitination. E3 ubiquitin ligase involved in different processes such as development and immune response. Serves as a negative regulator for innate immune signaling pathways by suppressing RLR-induced activation of IRF3/7 and NF-kappa-B via interaction with adapter ECSIT. Regulates autophagy through modulating both the transcription and the ubiquitination of BECN1. On the one hand, regulates the transcription of BECN1 through negatively modulating the NF-kappa-B pathway. On the other hand, regulates TRAF6-mediated 'Lys-63'-linked ubiquitination of BECN1, thus affecting the formation of the BECN1-PIK3C3 complex. In addition, mediates 'Lys-48'-linked ubiquitination of TRAF6 and thereby promotes TRAF6 proteasomal degradation. Also acts as a critical regulator for early embryo development from blastocyst stage to gastrula through modulating F-actin assembly and WASH1 'Lys-63'-linked ubiquitination. The chain is Tripartite motif-containing protein 59 (Trim59) from Mus musculus (Mouse).